Here is a 326-residue protein sequence, read N- to C-terminus: Flap endonuclease 1 (326 aa).

Residues 1–100 (MGNADLRSLA…DEVEKRREQR (100 aa)) form an N-domain region. Residues Asp-28, Asp-82, Glu-154, Glu-156, Asp-175, Asp-177, and Asp-225 each coordinate Mg(2+). The interval 118-246 (RVAKLDSRTQ…TAVKDLHEHG (129 aa)) is I-domain. Residues 318–326 (VQTGLDRWA) are interaction with PCNA.

This sequence belongs to the XPG/RAD2 endonuclease family. FEN1 subfamily. As to quaternary structure, interacts with PCNA. PCNA stimulates the nuclease activity without altering cleavage specificity. Mg(2+) is required as a cofactor.

Functionally, structure-specific nuclease with 5'-flap endonuclease and 5'-3' exonuclease activities involved in DNA replication and repair. During DNA replication, cleaves the 5'-overhanging flap structure that is generated by displacement synthesis when DNA polymerase encounters the 5'-end of a downstream Okazaki fragment. Binds the unpaired 3'-DNA end and kinks the DNA to facilitate 5' cleavage specificity. Cleaves one nucleotide into the double-stranded DNA from the junction in flap DNA, leaving a nick for ligation. Also involved in the base excision repair (BER) pathway. Acts as a genome stabilization factor that prevents flaps from equilibrating into structures that lead to duplications and deletions. Also possesses 5'-3' exonuclease activity on nicked or gapped double-stranded DNA. The sequence is that of Flap endonuclease 1 from Haloarcula marismortui (strain ATCC 43049 / DSM 3752 / JCM 8966 / VKM B-1809) (Halobacterium marismortui).